Reading from the N-terminus, the 335-residue chain is Olfactory receptor 9K2 (335 aa).

Topologically, residues 1–50 are extracellular; it reads MLGSKPRVHLYILPCASQQVSTMGDRGTSNHSEMTDFILAGFRVRPELHI. N-linked (GlcNAc...) asparagine glycosylation is present at asparagine 30. The helical transmembrane segment at 51-71 threads the bilayer; the sequence is LLFLLFLFVYAMILLGNVGMM. Residues 72–79 lie on the Cytoplasmic side of the membrane; it reads TIIMTDPR. The chain crosses the membrane as a helical span at residues 80–100; sequence LNTPMYFFLGNLSFIDLFYSS. The Extracellular portion of the chain corresponds to 101 to 124; it reads VIEPKAMINFWSENKSISFAGCVA. Asparagine 114 carries an N-linked (GlcNAc...) asparagine glycan. Cysteine 122 and cysteine 214 form a disulfide bridge. The helical transmembrane segment at 125–145 threads the bilayer; that stretch reads QLFLFALLIVTEGFLLAAMAY. The Cytoplasmic portion of the chain corresponds to 146-164; it reads DRFIAICNPLLYSVQMSTR. Residues 165–185 form a helical membrane-spanning segment; the sequence is LCTQLVAGSYFCGCISSVIQT. The Extracellular portion of the chain corresponds to 186 to 222; sequence SMTFTLSFCASRAVDHFYCDSRPLQRLSCSDLFIHRM. The helical transmembrane segment at 223 to 242 threads the bilayer; that stretch reads ISFSLSCIIILPTIIVIIVS. Over 243-262 the chain is Cytoplasmic; sequence YMYIVSTVLKIHSTEGHKKA. The helical transmembrane segment at 263–283 threads the bilayer; that stretch reads FSTCSSHLGVVSVLYGAVFFM. At 284–296 the chain is on the extracellular side; it reads YLTPDRFPELSKV. Over 316–335 the chain is Cytoplasmic; the sequence is RNKDVQEALKKFLEKKNIIL.

It belongs to the G-protein coupled receptor 1 family.

The protein resides in the cell membrane. Functionally, odorant receptor. The chain is Olfactory receptor 9K2 (OR9K2) from Homo sapiens (Human).